Reading from the N-terminus, the 305-residue chain is tRNA dimethylallyltransferase (305 aa).

ATP is bound at residue 11–18 (GPTAVGKT). 13 to 18 (TAVGKT) is a substrate binding site. The segment at 36 to 39 (DSMQ) is interaction with substrate tRNA.

Belongs to the IPP transferase family. As to quaternary structure, monomer. Requires Mg(2+) as cofactor.

The catalysed reaction is adenosine(37) in tRNA + dimethylallyl diphosphate = N(6)-dimethylallyladenosine(37) in tRNA + diphosphate. Its function is as follows. Catalyzes the transfer of a dimethylallyl group onto the adenine at position 37 in tRNAs that read codons beginning with uridine, leading to the formation of N6-(dimethylallyl)adenosine (i(6)A). The sequence is that of tRNA dimethylallyltransferase from Listeria monocytogenes serovar 1/2a (strain ATCC BAA-679 / EGD-e).